The sequence spans 122 residues: uncharacterized protein (122 aa).

This sequence belongs to the phage O protein family.

This is an uncharacterized protein from Escherichia coli O6:H1 (strain CFT073 / ATCC 700928 / UPEC).